Reading from the N-terminus, the 296-residue chain is Light-independent protochlorophyllide reductase iron-sulfur ATP-binding protein (296 aa).

ATP is bound by residues 39–44 (GIGKST) and K68. Residue S43 coordinates Mg(2+). Residues C124 and C158 each contribute to the [4Fe-4S] cluster site. Position 209–210 (209–210 (NR)) interacts with ATP.

Belongs to the NifH/BchL/ChlL family. Homodimer. Protochlorophyllide reductase is composed of three subunits; ChlL, ChlN and ChlB. [4Fe-4S] cluster serves as cofactor.

It catalyses the reaction chlorophyllide a + oxidized 2[4Fe-4S]-[ferredoxin] + 2 ADP + 2 phosphate = protochlorophyllide a + reduced 2[4Fe-4S]-[ferredoxin] + 2 ATP + 2 H2O. Its pathway is porphyrin-containing compound metabolism; chlorophyll biosynthesis (light-independent). Component of the dark-operative protochlorophyllide reductase (DPOR) that uses Mg-ATP and reduced ferredoxin to reduce ring D of protochlorophyllide (Pchlide) to form chlorophyllide a (Chlide). This reaction is light-independent. The L component serves as a unique electron donor to the NB-component of the complex, and binds Mg-ATP. This is Light-independent protochlorophyllide reductase iron-sulfur ATP-binding protein from Synechococcus sp. (strain WH7803).